Consider the following 426-residue polypeptide: Dihydroorotase (426 aa).

Zn(2+)-binding residues include histidine 58 and histidine 60. Substrate-binding positions include 60–62 and asparagine 92; that span reads HLR. Zn(2+)-binding residues include aspartate 150, histidine 177, and histidine 230. Asparagine 276 contacts substrate. Aspartate 303 provides a ligand contact to Zn(2+). Aspartate 303 is an active-site residue. Residues histidine 307 and 321-322 each bind substrate; that span reads FG.

This sequence belongs to the metallo-dependent hydrolases superfamily. DHOase family. Class I DHOase subfamily. The cofactor is Zn(2+).

It catalyses the reaction (S)-dihydroorotate + H2O = N-carbamoyl-L-aspartate + H(+). Its pathway is pyrimidine metabolism; UMP biosynthesis via de novo pathway; (S)-dihydroorotate from bicarbonate: step 3/3. Its function is as follows. Catalyzes the reversible cyclization of carbamoyl aspartate to dihydroorotate. The protein is Dihydroorotase of Listeria monocytogenes serovar 1/2a (strain ATCC BAA-679 / EGD-e).